A 190-amino-acid chain; its full sequence is Putative manganese efflux pump MntP (190 aa).

6 consecutive transmembrane segments (helical) span residues 3–23 (PISL…AALG), 41–61 (LIFG…GQVA), 69–89 (DHWI…YNGL), 105–125 (FWIL…VGVG), 133–153 (IMVA…IGVM), and 168–188 (IVGG…HLTA).

It belongs to the MntP (TC 9.B.29) family.

The protein localises to the cell inner membrane. Functionally, probably functions as a manganese efflux pump. The polypeptide is Putative manganese efflux pump MntP (Pseudomonas syringae pv. tomato (strain ATCC BAA-871 / DC3000)).